The primary structure comprises 250 residues: Methionine aminopeptidase (250 aa).

A substrate-binding site is contributed by H77. A divalent metal cation is bound by residues D95, D106, and H169. H176 is a binding site for substrate. A divalent metal cation is bound by residues E202 and E233.

It belongs to the peptidase M24A family. Methionine aminopeptidase type 1 subfamily. Monomer. Requires Co(2+) as cofactor. The cofactor is Zn(2+). It depends on Mn(2+) as a cofactor. Fe(2+) is required as a cofactor.

It carries out the reaction Release of N-terminal amino acids, preferentially methionine, from peptides and arylamides.. Functionally, removes the N-terminal methionine from nascent proteins. The N-terminal methionine is often cleaved when the second residue in the primary sequence is small and uncharged (Met-Ala-, Cys, Gly, Pro, Ser, Thr, or Val). Requires deformylation of the N(alpha)-formylated initiator methionine before it can be hydrolyzed. This chain is Methionine aminopeptidase, found in Clostridium acetobutylicum (strain ATCC 824 / DSM 792 / JCM 1419 / IAM 19013 / LMG 5710 / NBRC 13948 / NRRL B-527 / VKM B-1787 / 2291 / W).